The sequence spans 512 residues: Maturase K (512 aa).

Belongs to the intron maturase 2 family. MatK subfamily.

The protein resides in the plastid. It localises to the chloroplast. Usually encoded in the trnK tRNA gene intron. Probably assists in splicing its own and other chloroplast group II introns. This Alisma canaliculatum (Water plantain) protein is Maturase K.